The chain runs to 642 residues: Epithelial sodium channel subunit alpha (642 aa).

The Cytoplasmic segment spans residues 1-81; it reads MHQVVTVKAE…VCSKRNKMKT (81 aa). A helical membrane pass occupies residues 82–102; sequence AFWSVLFFLTFGLMYWQFGIL. The Extracellular portion of the chain corresponds to 103 to 553; sequence YREYFSFPVN…NQWSLWFGSS (451 aa). Intrachain disulfides connect cysteine 130-cysteine 297, cysteine 222-cysteine 229, cysteine 274-cysteine 281, cysteine 385-cysteine 470, cysteine 407-cysteine 447, cysteine 407-cysteine 466, cysteine 411-cysteine 462, cysteine 420-cysteine 447, cysteine 420-cysteine 470, and cysteine 422-cysteine 436. The disordered stretch occupies residues 170 to 209; sequence GAAQSSQKRSQRSLSHHVQRHPLRRRKRNEPVSLKGNSPP. Residues 178–197 are compositionally biased toward basic residues; sequence RSQRSLSHHVQRHPLRRRKR. Residues 554 to 574 traverse the membrane as a helical segment; the sequence is VLSVVELAELILDFIAITIIL. The Cytoplasmic segment spans residues 575 to 642; it reads SFKRFRSRQV…RDGEAVIGLE (68 aa). The interval 587-608 is disordered; sequence PSVPPPGAHDNTAFQSEPADPS.

Belongs to the amiloride-sensitive sodium channel (TC 1.A.6) family. SCNN1A subfamily. In terms of assembly, heterotrimer; disulfide-linked and containing an alpha/SCNN1A, a beta/SCNN1B and a gamma/SCNN1G subunit.

It is found in the apical cell membrane. Its subcellular location is the cell projection. The protein resides in the cilium. It localises to the cytoplasmic granule. The protein localises to the cytoplasm. It is found in the cytoplasmic vesicle. Its subcellular location is the secretory vesicle. The protein resides in the acrosome. It localises to the flagellum. The catalysed reaction is Na(+)(in) = Na(+)(out). With respect to regulation, originally identified and characterized by its inhibition by the diuretic drug amiloride. Its function is as follows. This is one of the three pore-forming subunits of the heterotrimeric epithelial sodium channel (ENaC), a critical regulator of sodium balance and fluid homeostasis. ENaC operates in epithelial tissues, where it mediates the electrodiffusion of sodium ions from extracellular fluid through the apical membrane of cells, with water following osmotically. The protein is Epithelial sodium channel subunit alpha of Pelodiscus sinensis (Chinese softshell turtle).